The sequence spans 1237 residues: Zinc finger protein ZFAT (1237 aa).

The C2H2-type 1 zinc finger occupies 12-35 (FMCKCCNLFSPNQSELVTHVSEKH). Positions 50–110 (RPLNTPENPN…GPLATEEGSR (61 aa)) are disordered. Residues 70–81 (MKRKRGRPKGST) show a composition bias toward basic residues. The segment at 116 to 141 (LECSKCCRKFSNTRQLRKHICIIVLN) adopts a C2H2-type 2; degenerate zinc-finger fold. Positions 147–188 (GDAGNESDLDLEKTYKEDDREKASKRPRAQKTEKVQKISGKE) are disordered. Positions 156–186 (DLEKTYKEDDREKASKRPRAQKTEKVQKISG) are enriched in basic and acidic residues. C2H2-type zinc fingers lie at residues 271–293 (FTCE…LRIH), 299–321 (YKCS…LRKH), 326–349 (FACD…ERVH), 354–377 (QHCR…RDMH), 404–426 (YDCH…MLVH), 432–454 (FACE…VRKH), and 458–481 (YVCA…REVH). The Zn(2+) site is built by Cys-273, Cys-276, His-289, His-293, Cys-301, Cys-304, His-317, His-321, Cys-328, Cys-331, His-344, His-349, Cys-356, Cys-359, His-372, His-377, Cys-406, Cys-409, His-422, and His-426. The Zn(2+) site is built by Cys-460, Cys-463, His-476, and His-481. Disordered regions lie at residues 551–576 (VPGD…LSPC) and 601–671 (SDTS…CLRA). The span at 565-574 (TPQSESSSLS) shows a compositional bias: polar residues. A compositionally biased stretch (low complexity) spans 601–617 (SDTSSAEPPAAAEATSD). C2H2-type zinc fingers lie at residues 737–759 (LECE…VRTH), 765–788 (YYCS…IQKH), 793–817 (LKCP…LKVH), and 825–848 (YSCP…KTNH). Positions 767, 770, 783, 788, 795, 800, 813, 817, 827, 830, 843, 848, 877, 880, 894, 898, 906, 909, 922, 926, 934, 937, 950, and 953 each coordinate Zn(2+). The C2H2-type 14; degenerate zinc finger occupies 875 to 898 (MKCPYCDFYFMKNGSDLQRHIWAH). 5 C2H2-type zinc fingers span residues 904–926 (FKCS…MNRH), 932–954 (HLCD…KLLH), 961–983 (FKCT…MEQH), 989–1012 (FRCA…NRKH), and 1036–1059 (LKCP…KNKH).

Detected in spleen and thymus but not in liver, muscle, heart, kidney, brain, bone marrow or pancreas. Expressed in CD19+, CD4+ and CD8+ lymphocytes but not in CD11b+ lymphocytes or peritoneal macrophages (at protein level).

Its subcellular location is the nucleus. The protein resides in the cytoplasm. It is found in the cytosol. Functionally, may be involved in transcriptional regulation. Overexpression causes down-regulation of a number of genes involved in the immune response. Some genes are also up-regulated. This chain is Zinc finger protein ZFAT (Zfat), found in Mus musculus (Mouse).